The sequence spans 217 residues: Uracil-DNA glycosylase (217 aa).

D62 acts as the Proton acceptor in catalysis.

The protein belongs to the uracil-DNA glycosylase (UDG) superfamily. UNG family.

It is found in the cytoplasm. It catalyses the reaction Hydrolyzes single-stranded DNA or mismatched double-stranded DNA and polynucleotides, releasing free uracil.. Its function is as follows. Excises uracil residues from the DNA which can arise as a result of misincorporation of dUMP residues by DNA polymerase or due to deamination of cytosine. The chain is Uracil-DNA glycosylase from Streptococcus equi subsp. equi (strain 4047).